A 160-amino-acid polypeptide reads, in one-letter code: Variant surface antigen C (160 aa).

Residues M1–S29 form the signal peptide. A lipid anchor (N-palmitoyl cysteine) is attached at C30. C30 carries the S-diacylglycerol cysteine lipid modification. The disordered stretch occupies residues Q32–T160. Low complexity-rich tracts occupy residues S38–T54 and S62–T87. Repeat copies occupy residues E86 to Q97, E98 to Q109, E110 to Q121, E122 to Q133, E134 to Q145, and E146 to Q157. The segment at E86–Q157 is 6 X 12 AA tandem repeats. Over residues E93–T160 the composition is skewed to polar residues.

The protein resides in the cell membrane. In terms of biological role, responsible for the antigenic diversity for host adaptation. The sequence is that of Variant surface antigen C (vlpC) from Mesomycoplasma hyorhinis (Mycoplasma hyorhinis).